Reading from the N-terminus, the 560-residue chain is Nuclear receptor subfamily 5 group A member 2 (560 aa).

The disordered stretch occupies residues isoleucine 21–proline 55. Residues glutamate 28–aspartate 48 show a composition bias toward basic and acidic residues. A DNA-binding region (nuclear receptor) is located at residues glutamate 104–glutamate 175. Zn(2+) is bound by residues cysteine 107, cysteine 110, cysteine 124, cysteine 127, cysteine 143, cysteine 149, cysteine 159, and cysteine 162. 2 NR C4-type zinc fingers span residues cysteine 107–cysteine 127 and cysteine 143–cysteine 167. Residues lysine 173–lysine 188 form a C-terminal extension (CTE) region. Residues phenylalanine 189–arginine 208 carry the FTZ-F1 box motif. A Glycyl lysine isopeptide (Lys-Gly) (interchain with G-Cter in SUMO1) cross-link involves residue lysine 289. In terms of domain architecture, NR LBD spans serine 319–lysine 558. A phospholipid derivative contacts are provided by tyrosine 535 and lysine 539. Positions tyrosine 547–lysine 558 are AF-2.

Belongs to the nuclear hormone receptor family. NR5 subfamily. As to quaternary structure, monomer; Binds DNA as a monomer. Interacts with nuclear receptor corepressors NR0B1 and NR0B2; repressing NR5A2 nuclear receptor activity. Interacts with nuclear receptor coactivators CTNNB1, PPARGC1A and NCOA2; interaction takes place following ligand-binding and promotes target gene activation. Interacts (when sumoylated) with GPS2; interaction with GPS2 onto hepatic acute phase protein promoters prevents N-Cor corepressor complex dissociation. Interacts with HNF1A. Interacts with GRIP1. Post-translationally, sumoylated by SUMO1 at Lys-289 during the hepatic acute phase response, leading to promote interaction with GPS2 and prevent N-Cor corepressor complex dissociation.

The protein resides in the nucleus. It is found in the chromosome. Functionally, orphan nuclear receptor that binds DNA as a monomer to the 5'-TCAAGGCCA-3' sequence and controls expression of target genes: regulates key biological processes, such as early embryonic development, cholesterol and bile acid synthesis pathways, as well as liver and pancreas morphogenesis. Ligand-binding causes conformational change which causes recruitment of coactivators, promoting target gene activation. The specific ligand is unknown, but specific phospholipids, such as phosphatidylethanolamine, phosphatidylserine, dilauroyl phosphatidylcholine and diundecanoyl phosphatidylcholine can act as ligand in vitro. Acts as a pioneer transcription factor, which unwraps target DNA from histones and elicits local opening of closed chromatin. Plays a central role during preimplantation stages of embryonic development. Plays a minor role in zygotic genome activation (ZGA) by regulating a small set of two-cell stage genes. Plays a major role in morula development (2-16 cells embryos) by acting as a master regulator at the 8-cell stage, controlling expression of lineage-specifying transcription factors and genes involved in mitosis, telomere maintenance and DNA repair. Zygotic NR5A2 binds to both closed and open chromatin with other transcription factors, often at SINE B1/Alu repeats DNA elements, promoting chromatin accessibility at nearby regulatory regions. Also involved in the epiblast stage of development and embryonic stem cell pluripotency, by promoting expression of POU5F1/OCT4. Regulates other processes later in development, such as formation of connective tissue in lower jaw and middle ear, neural stem cell differentiation, ovarian follicle development and Sertoli cell differentiation. Involved in exocrine pancreas development and acinar cell differentiation. Acts as an essential transcriptional regulator of lipid metabolism. Key regulator of cholesterol 7-alpha-hydroxylase gene (CYP7A) expression in liver. Activates the transcription of CYP2C38. Also acts as a negative regulator of inflammation in different organs, such as intestine, liver and pancreas. Protects against intestinal inflammation via its ability to regulate glucocorticoid production. Plays an anti-inflammatory role during the hepatic acute phase response by acting as a corepressor: inhibits the hepatic acute phase response by preventing dissociation of the N-Cor corepressor complex. Acts as a regulator of immunity by promoting lymphocyte T-cell development, proliferation and effector functions. Also involved in resolution of endoplasmic reticulum stress in the liver. The chain is Nuclear receptor subfamily 5 group A member 2 from Mus musculus (Mouse).